We begin with the raw amino-acid sequence, 129 residues long: Protein yippee-like At5g53940 (129 aa).

The Yippee domain occupies 12–109 (RSYRCRFCRT…LERGRIVDEI (98 aa)). Cysteine 16, cysteine 19, cysteine 72, and cysteine 75 together coordinate Zn(2+).

Belongs to the yippee family.

This Arabidopsis thaliana (Mouse-ear cress) protein is Protein yippee-like At5g53940.